Reading from the N-terminus, the 99-residue chain is Large ribosomal subunit protein eL21 (99 aa).

This sequence belongs to the eukaryotic ribosomal protein eL21 family.

In Ignicoccus hospitalis (strain KIN4/I / DSM 18386 / JCM 14125), this protein is Large ribosomal subunit protein eL21.